The sequence spans 157 residues: Capsid protein (157 aa).

Serine 2 carries the post-translational modification N-acetylserine; by host.

This sequence belongs to the virgaviridae capsid protein family.

The protein localises to the virion. In terms of biological role, capsid protein self-assembles to form rod-shaped virions about 18 nm in diameter with a central canal enclosing the viral genomic RNA. This Digitalis lanata (Grecian foxglove) protein is Capsid protein (CP).